The following is a 257-amino-acid chain: Imidazole glycerol phosphate synthase subunit HisF (257 aa).

Catalysis depends on residues Asp12 and Asp131.

This sequence belongs to the HisA/HisF family. As to quaternary structure, heterodimer of HisH and HisF.

It is found in the cytoplasm. The enzyme catalyses 5-[(5-phospho-1-deoxy-D-ribulos-1-ylimino)methylamino]-1-(5-phospho-beta-D-ribosyl)imidazole-4-carboxamide + L-glutamine = D-erythro-1-(imidazol-4-yl)glycerol 3-phosphate + 5-amino-1-(5-phospho-beta-D-ribosyl)imidazole-4-carboxamide + L-glutamate + H(+). Its pathway is amino-acid biosynthesis; L-histidine biosynthesis; L-histidine from 5-phospho-alpha-D-ribose 1-diphosphate: step 5/9. Its function is as follows. IGPS catalyzes the conversion of PRFAR and glutamine to IGP, AICAR and glutamate. The HisF subunit catalyzes the cyclization activity that produces IGP and AICAR from PRFAR using the ammonia provided by the HisH subunit. The sequence is that of Imidazole glycerol phosphate synthase subunit HisF from Burkholderia lata (strain ATCC 17760 / DSM 23089 / LMG 22485 / NCIMB 9086 / R18194 / 383).